Reading from the N-terminus, the 298-residue chain is UDP-N-acetylenolpyruvoylglucosamine reductase (298 aa).

In terms of domain architecture, FAD-binding PCMH-type spans 26 to 191 (KTGGAADVFV…LDATFSLALE (166 aa)). R170 is a catalytic residue. The Proton donor role is filled by S220. E290 is an active-site residue.

This sequence belongs to the MurB family. FAD is required as a cofactor.

Its subcellular location is the cytoplasm. It carries out the reaction UDP-N-acetyl-alpha-D-muramate + NADP(+) = UDP-N-acetyl-3-O-(1-carboxyvinyl)-alpha-D-glucosamine + NADPH + H(+). It functions in the pathway cell wall biogenesis; peptidoglycan biosynthesis. Cell wall formation. This Listeria monocytogenes serovar 1/2a (strain ATCC BAA-679 / EGD-e) protein is UDP-N-acetylenolpyruvoylglucosamine reductase.